Consider the following 204-residue polypeptide: Large ribosomal subunit protein bL25 (204 aa).

This sequence belongs to the bacterial ribosomal protein bL25 family. CTC subfamily. Part of the 50S ribosomal subunit; part of the 5S rRNA/L5/L18/L25 subcomplex. Contacts the 5S rRNA. Binds to the 5S rRNA independently of L5 and L18.

Its function is as follows. This is one of the proteins that binds to the 5S RNA in the ribosome where it forms part of the central protuberance. The sequence is that of Large ribosomal subunit protein bL25 from Pseudomonas aeruginosa (strain LESB58).